A 377-amino-acid polypeptide reads, in one-letter code: Compound eye opsin BCRH2 (377 aa).

The Extracellular segment spans residues 1–53; that stretch reads MTNATGPQMAYYGAASMDFGYPEGVSIVDFVRPEIKPYVHQHWYNYPPVNPMW. The N-linked (GlcNAc...) asparagine glycan is linked to N3. A helical transmembrane segment spans residues 54 to 78; sequence HYLLGVIYLFLGTVSIFGNGLVIYL. The Cytoplasmic segment spans residues 79–90; that stretch reads FNKSAALRTPAN. The helical transmembrane segment at 91 to 115 threads the bilayer; sequence ILVVNLALSDLIMLTTNVPFFTYNC. The Extracellular segment spans residues 116–131; it reads FSGGVWMFSPQYCEIY. A disulfide bridge links C128 with C205. A helical transmembrane segment spans residues 132–151; it reads ACLGAITGVCSIWLLCMISF. Over 152-170 the chain is Cytoplasmic; that stretch reads DRYNIICNGFNGPKLTTGK. The chain crosses the membrane as a helical span at residues 171–194; the sequence is AVVFALISWVIAIGCALPPFFGWG. At 195 to 218 the chain is on the extracellular side; sequence NYILEGILDSCSYDYLTQDFNTFS. The helical transmembrane segment at 219 to 246 threads the bilayer; the sequence is YNIFIFVFDYFLPAAIIVFSYVFIVKAI. At 247–281 the chain is on the cytoplasmic side; sequence FAHEAAMRAQAKKMNVSTLRSNEADAQRAEIRIAK. Residues 282–305 form a helical membrane-spanning segment; sequence TALVNVSLWFICWTPYALISLKGV. The Extracellular portion of the chain corresponds to 306–313; sequence MGDTSGIT. The chain crosses the membrane as a helical span at residues 314–338; that stretch reads PLVSTLPALLAKSCSCYNPFVYAIS. The residue at position 325 (K325) is an N6-(retinylidene)lysine. At 339–377 the chain is on the cytoplasmic side; it reads HPKYRLAITQHLPWFCVHETETKSNDDSQSNSTVAQDKA.

It belongs to the G-protein coupled receptor 1 family. Opsin subfamily. In terms of processing, phosphorylated on some or all of the serine and threonine residues present in the C-terminal region. Expressed in all of the seven retinular cells (R1-R7) forming the main rhabdom in each ommatidium.

It is found in the membrane. Functionally, visual pigments are the light-absorbing molecules that mediate vision. They consist of an apoprotein, opsin, covalently linked to cis-retinal. This opsin produces visual pigments with maximal absorption in the blue-green region of the spectrum. This Hemigrapsus sanguineus (Asian shore crab) protein is Compound eye opsin BCRH2.